Consider the following 1201-residue polypeptide: ATPase with bromodomain protein abo2 (1201 aa).

Disordered regions lie at residues 1 to 223 (MRRR…MRGP) and 305 to 324 (CDSD…TSDV). The segment covering 13–24 (DDNEDNEEDDDY) has biased composition (acidic residues). Residues 29–38 (HSEKSEDHSN) show a composition bias toward basic and acidic residues. Polar residues predominate over residues 66–89 (FSSLQKHLNTETPSFSVSIENPSK). A compositionally biased stretch (acidic residues) spans 129–146 (TDNNEDESTTFKDEEDDL). Basic residues predominate over residues 212–221 (RRGRRKRKMR). Over residues 312-323 (ELSSTSSEQTSD) the composition is skewed to low complexity. 413–420 (GPPGTGKT) contacts ATP. The region spanning 897-1026 (KIKNKIQVKL…AHAELNVDEL (130 aa)) is the Bromo domain.

The protein belongs to the AAA ATPase family.

The protein resides in the nucleus. It catalyses the reaction ATP + H2O = ADP + phosphate + H(+). Its function is as follows. Probable ATPase which may play a role in nucleosome organization. The protein is ATPase with bromodomain protein abo2 of Schizosaccharomyces pombe (strain 972 / ATCC 24843) (Fission yeast).